The sequence spans 473 residues: Glutamate--tRNA ligase (473 aa).

Residues 10 to 20 (PSPTGYLHLGN) carry the 'HIGH' region motif. Zn(2+)-binding residues include cysteine 98, cysteine 100, cysteine 125, and histidine 127. The 'KMSKS' region signature appears at 242–246 (KLSKR). Lysine 245 is a binding site for ATP.

Belongs to the class-I aminoacyl-tRNA synthetase family. Glutamate--tRNA ligase type 1 subfamily. Monomer. Zn(2+) is required as a cofactor.

The protein resides in the cytoplasm. The enzyme catalyses tRNA(Glu) + L-glutamate + ATP = L-glutamyl-tRNA(Glu) + AMP + diphosphate. Catalyzes the attachment of glutamate to tRNA(Glu) in a two-step reaction: glutamate is first activated by ATP to form Glu-AMP and then transferred to the acceptor end of tRNA(Glu). The sequence is that of Glutamate--tRNA ligase from Aquifex aeolicus (strain VF5).